We begin with the raw amino-acid sequence, 218 residues long: Glutathione S-transferase Mu 1 (218 aa).

Residues 2–88 (PMTLGYWDIR…YIARKHNLCG (87 aa)) enclose the GST N-terminal domain. Residue 7 to 8 (YW) participates in glutathione binding. Thr34 is subject to Phosphothreonine. Glutathione contacts are provided by residues 43 to 46 (RSQW), Lys50, 59 to 60 (NL), and 72 to 73 (QS). Residues 90–208 (TEEEKIRVDI…KSSRFLPKPL (119 aa)) enclose the GST C-terminal domain. Tyr116 is a binding site for substrate.

It belongs to the GST superfamily. Mu family. Homodimer.

The protein resides in the cytoplasm. It carries out the reaction RX + glutathione = an S-substituted glutathione + a halide anion + H(+). It catalyses the reaction prostaglandin A2 + glutathione = prostaglandin A2-S-(R)-glutathione. The catalysed reaction is prostaglandin J2 + glutathione = prostaglandin J2-S-(R)-glutathione. The enzyme catalyses prostaglandin J2 + glutathione = prostaglandin J2-S-(S)-glutathione. It carries out the reaction prostaglandin A2 + glutathione = prostaglandin A2-S-(S)-glutathione. It catalyses the reaction 11(S)-hydroxy-14(S),15(S)-epoxy-(5Z,8Z,12E)-eicosatrienoate + glutathione = (11S,15S)-dihydroxy-14(R)-S-glutathionyl-(5Z,8Z,12E)-eicosatrienoate. In terms of biological role, conjugation of reduced glutathione to a wide number of exogenous and endogenous hydrophobic electrophiles. Involved in the formation of glutathione conjugates of both prostaglandin A2 (PGA2) and prostaglandin J2 (PGJ2). Participates in the formation of novel hepoxilin regioisomers. The sequence is that of Glutathione S-transferase Mu 1 (GSTM1) from Macaca fascicularis (Crab-eating macaque).